Consider the following 198-residue polypeptide: Nucleoside triphosphate pyrophosphatase 1 (198 aa).

The active-site Proton acceptor is Asp75.

The protein belongs to the Maf family. A divalent metal cation is required as a cofactor.

It localises to the cytoplasm. It catalyses the reaction a ribonucleoside 5'-triphosphate + H2O = a ribonucleoside 5'-phosphate + diphosphate + H(+). It carries out the reaction a 2'-deoxyribonucleoside 5'-triphosphate + H2O = a 2'-deoxyribonucleoside 5'-phosphate + diphosphate + H(+). Its function is as follows. Nucleoside triphosphate pyrophosphatase. May have a dual role in cell division arrest and in preventing the incorporation of modified nucleotides into cellular nucleic acids. This is Nucleoside triphosphate pyrophosphatase 1 from Jannaschia sp. (strain CCS1).